The primary structure comprises 473 residues: ATP synthase subunit beta (473 aa).

156 to 163 is an ATP binding site; that stretch reads GGAGVGKT.

It belongs to the ATPase alpha/beta chains family. F-type ATPases have 2 components, CF(1) - the catalytic core - and CF(0) - the membrane proton channel. CF(1) has five subunits: alpha(3), beta(3), gamma(1), delta(1), epsilon(1). CF(0) has three main subunits: a(1), b(2) and c(9-12). The alpha and beta chains form an alternating ring which encloses part of the gamma chain. CF(1) is attached to CF(0) by a central stalk formed by the gamma and epsilon chains, while a peripheral stalk is formed by the delta and b chains.

It localises to the cell inner membrane. It catalyses the reaction ATP + H2O + 4 H(+)(in) = ADP + phosphate + 5 H(+)(out). In terms of biological role, produces ATP from ADP in the presence of a proton gradient across the membrane. The catalytic sites are hosted primarily by the beta subunits. This chain is ATP synthase subunit beta, found in Desulfovibrio desulfuricans (strain ATCC 27774 / DSM 6949 / MB).